The following is a 213-amino-acid chain: Cytochrome b6 (213 aa).

A helical membrane pass occupies residues 30-50 (IFYCLGGLTLLCFIIQCLTGV). Cys-33 provides a ligand contact to heme c. Residues His-84 and His-98 each contribute to the heme b site. A run of 3 helical transmembrane segments spans residues 88 to 108 (CQLMILLVFLHMLRVYYTGAF), 114 to 134 (LNWVAGCFLLVLSLGLAFTGY), and 184 to 204 (LHVMILPAITIGFLVAHFIMI). Positions 185 and 200 each coordinate heme b.

This sequence belongs to the cytochrome b family. PetB subfamily. In terms of assembly, the subunits of the cytochrome bc complex are a Rieske Fe-S protein (PetC), cytochrome b6 (PetB), subunit IV (PetD), and a diheme cytochrome c (PetX). The cofactor is heme b. Requires heme c as cofactor.

The protein localises to the cell membrane. Component of the cytochrome bc complex which donates electrons to the photosynthetic reaction center. This chain is Cytochrome b6, found in Heliobacterium modesticaldum (strain ATCC 51547 / Ice1).